Here is a 460-residue protein sequence, read N- to C-terminus: Jacalin-related lectin 36 (460 aa).

In terms of domain architecture, Jacalin-type lectin 1 spans 1–131; it reads MAAATMSWDD…LNSIDVHFAP (131 aa). Alanine 2 bears the N-acetylalanine mark. 3 disordered regions span residues 34–57, 133–162, and 291–334; these read YDGD…VSLS, PSSS…WDDG, and SGRG…PHEG. A compositionally biased stretch (low complexity) spans 133–143; sequence PSSSSSSSSLS. Positions 145–289 constitute a Jacalin-type lectin 2 domain; the sequence is ANKVDAQGGK…LNALGAYFAP (145 aa). The span at 292 to 309 shows a compositional bias: polar residues; it reads GRGTPSATQPPGSAQPTG. Positions 313-457 constitute a Jacalin-type lectin 3 domain; the sequence is AKKLEAKGGN…IHQVGVHVKP (145 aa).

It belongs to the jacalin lectin family.

This chain is Jacalin-related lectin 36 (JAL36), found in Arabidopsis thaliana (Mouse-ear cress).